A 255-amino-acid chain; its full sequence is Imidazole glycerol phosphate synthase subunit HisF (255 aa).

Active-site residues include D11 and D130.

Belongs to the HisA/HisF family. Heterodimer of HisH and HisF.

The protein localises to the cytoplasm. The enzyme catalyses 5-[(5-phospho-1-deoxy-D-ribulos-1-ylimino)methylamino]-1-(5-phospho-beta-D-ribosyl)imidazole-4-carboxamide + L-glutamine = D-erythro-1-(imidazol-4-yl)glycerol 3-phosphate + 5-amino-1-(5-phospho-beta-D-ribosyl)imidazole-4-carboxamide + L-glutamate + H(+). Its pathway is amino-acid biosynthesis; L-histidine biosynthesis; L-histidine from 5-phospho-alpha-D-ribose 1-diphosphate: step 5/9. In terms of biological role, IGPS catalyzes the conversion of PRFAR and glutamine to IGP, AICAR and glutamate. The HisF subunit catalyzes the cyclization activity that produces IGP and AICAR from PRFAR using the ammonia provided by the HisH subunit. In Prochlorococcus marinus subsp. pastoris (strain CCMP1986 / NIES-2087 / MED4), this protein is Imidazole glycerol phosphate synthase subunit HisF.